The following is a 170-amino-acid chain: MEVIIKAKVKPTEDKYKVKKAILNIFPKAKLTFIEKDNEFGEWEGKTKSVEKLKELLRSQSILDAARMVLEKGMTENATKFYLNKQAAYVGAVNFDIDTHGGIFVKILADENEDIMKIIKDIAPRTKGGVIINEDELEEEEEKEDSEEIKEGHKEENNLKIKVIDNSSGD.

Residues 133–148 (NEDELEEEEEKEDSEE) show a composition bias toward acidic residues. The disordered stretch occupies residues 133–170 (NEDELEEEEEKEDSEEIKEGHKEENNLKIKVIDNSSGD). Over residues 149–163 (IKEGHKEENNLKIKV) the composition is skewed to basic and acidic residues.

The protein belongs to the UPF0201 family.

This Methanocaldococcus jannaschii (strain ATCC 43067 / DSM 2661 / JAL-1 / JCM 10045 / NBRC 100440) (Methanococcus jannaschii) protein is UPF0201 protein MJ1564.